Consider the following 470-residue polypeptide: Iron-sulfur cluster assembly SufBD family protein ABCI9 (470 aa).

Belongs to the iron-sulfur cluster assembly SufBD family.

This chain is Iron-sulfur cluster assembly SufBD family protein ABCI9 (ABCI9), found in Arabidopsis thaliana (Mouse-ear cress).